The following is a 67-amino-acid chain: Cell division protein ZapB (67 aa).

A coiled-coil region spans residues 3 to 59 (LELLSQLETKIQTALETIELLKLELDEEKEKAANLAEQNHQLKQELSSWNDKITGLV).

The protein belongs to the ZapB family. In terms of assembly, homodimer. The ends of the coiled-coil dimer bind to each other, forming polymers. Interacts with FtsZ.

It localises to the cytoplasm. In terms of biological role, non-essential, abundant cell division factor that is required for proper Z-ring formation. It is recruited early to the divisome by direct interaction with FtsZ, stimulating Z-ring assembly and thereby promoting cell division earlier in the cell cycle. Its recruitment to the Z-ring requires functional FtsA or ZipA. The polypeptide is Cell division protein ZapB (Shewanella amazonensis (strain ATCC BAA-1098 / SB2B)).